A 665-amino-acid chain; its full sequence is Long chain acyl-CoA synthetase 3 (665 aa).

228–239 provides a ligand contact to ATP; sequence IMYTSGTTGDPK. Positions 495–519 are fatty acid-binding; the sequence is DGWLHTGDVGEWQPDGAMKIIDRKK.

The protein belongs to the ATP-dependent AMP-binding enzyme family. Mg(2+) serves as cofactor.

It catalyses the reaction a long-chain fatty acid + ATP + CoA = a long-chain fatty acyl-CoA + AMP + diphosphate. The protein operates within lipid metabolism; fatty acid metabolism. Functionally, activation of long-chain fatty acids for both synthesis of cellular lipids, and degradation via beta-oxidation. Preferentially uses palmitate, palmitoleate, oleate and linoleate. This Arabidopsis thaliana (Mouse-ear cress) protein is Long chain acyl-CoA synthetase 3 (LACS3).